The chain runs to 123 residues: Small ribosomal subunit protein uS12 (123 aa).

The interval 1 to 31 is disordered; it reads MPTIQQLVRKGRHSKKAKVATAGLKGSPQRR. The segment covering 9–18 has biased composition (basic residues); it reads RKGRHSKKAK. Aspartate 89 carries the 3-methylthioaspartic acid modification.

The protein belongs to the universal ribosomal protein uS12 family. In terms of assembly, part of the 30S ribosomal subunit. Contacts proteins S8 and S17. May interact with IF1 in the 30S initiation complex.

With S4 and S5 plays an important role in translational accuracy. In terms of biological role, interacts with and stabilizes bases of the 16S rRNA that are involved in tRNA selection in the A site and with the mRNA backbone. Located at the interface of the 30S and 50S subunits, it traverses the body of the 30S subunit contacting proteins on the other side and probably holding the rRNA structure together. The combined cluster of proteins S8, S12 and S17 appears to hold together the shoulder and platform of the 30S subunit. This Corynebacterium aurimucosum (strain ATCC 700975 / DSM 44827 / CIP 107346 / CN-1) (Corynebacterium nigricans) protein is Small ribosomal subunit protein uS12.